Reading from the N-terminus, the 200-residue chain is Large ribosomal subunit protein bL25 (200 aa).

Residues 1–20 (MEARELKANVRKESGKEQAR) form a disordered region.

It belongs to the bacterial ribosomal protein bL25 family. CTC subfamily. Part of the 50S ribosomal subunit; part of the 5S rRNA/L5/L18/L25 subcomplex. Contacts the 5S rRNA. Binds to the 5S rRNA independently of L5 and L18.

In terms of biological role, this is one of the proteins that binds to the 5S RNA in the ribosome where it forms part of the central protuberance. This Syntrophus aciditrophicus (strain SB) protein is Large ribosomal subunit protein bL25.